The chain runs to 392 residues: THO complex subunit MFT1 (392 aa).

Composition is skewed to acidic residues over residues 258–271 and 290–330; these read DNIDEDYESDEDEE and NVDE…EVDG. The interval 258-392 is disordered; that stretch reads DNIDEDYESD…SASSSVEEVK (135 aa). Ser-266 bears the Phosphoserine mark. Residues 331-344 are compositionally biased toward polar residues; sequence ESSQQEDNSRQGNN. Residues 345 to 367 are compositionally biased toward acidic residues; the sequence is EETDKETGVIEEPDAVNDAEEAD. Over residues 377 to 392 the composition is skewed to polar residues; sequence GTTSDFSASSSVEEVK.

As to quaternary structure, component of the THO complex, which is composed of HPR1, MFT1, THO2 and THP2. Together with SUB2, TEX1 and YRA1, THO forms the transcription/export (TREX) complex. THO associates with DNA and RNA in vitro.

Its subcellular location is the nucleus. Its function is as follows. Component the THO subcomplex of the TREX complex, which operates in coupling transcription elongation to mRNA export. The THO complex is recruited to transcribed genes and moves along the gene with the elongating polymerase during transcription. THO is important for stabilizing nascent RNA in the RNA polymerase II elongation complex by preventing formation of DNA:RNA hybrids behind the elongating polymerase. It functions in cotranscriptional formation of an export-competent messenger ribonucleoprotein particle (mRNP) by facilitating the loading of ATP-dependent RNA helicase SUB2 and the mRNA export factor YRA1 along the nascent mRNA. This is THO complex subunit MFT1 (MFT1) from Saccharomyces cerevisiae (strain ATCC 204508 / S288c) (Baker's yeast).